A 183-amino-acid chain; its full sequence is uncharacterized protein (183 aa).

This is an uncharacterized protein from Bacillus subtilis (strain 168).